Reading from the N-terminus, the 445-residue chain is Reticulon-4 receptor-like 1 (445 aa).

Residues 1–24 (MLRKGCCVELLLLLLAGELPLGGG) form the signal peptide. The region spanning 25-54 (CPRDCVCYPAPMTVSCQAHNFAAIPEGIPE) is the LRRNT domain. LRR repeat units lie at residues 55–76 (DSER…HFSP), 77–98 (AMVT…TFEG), 101–123 (HLEE…TFQG), 126–147 (KLHA…IFGG), 150–171 (SLQY…IFVD), 174–195 (NLSH…IFRG), 198–219 (NLDR…AFHD), and 222–243 (RLTT…CLAP). The LRRCT domain occupies 255-306 (NAWDCGCRARSLWEWLRRFRGSSSAVPCATPELRQGQDLKLLRVEDFRNCTG). 2 disordered regions span residues 307–377 (PVSP…SGKE) and 401–424 (RPKR…QQAS). Basic residues-rich tracts occupy residues 352–366 (GYKK…HRNR) and 401–413 (RPKR…RRTP). A lipid anchor (GPI-anchor amidated serine) is attached at serine 424. The chain crosses the membrane as a helical span at residues 424–444 (SSGTALGAPLLAWILGLAVTL). Positions 425 to 445 (SGTALGAPLLAWILGLAVTLR) are cleaved as a propeptide — removed in mature form.

Belongs to the Nogo receptor family. In terms of assembly, identified in a complex that contains RTN4R, RTN4RL1 and NGFR; the interaction depends on the presence of chondroitin sulfate proteoglycans. Does not interact with MAG, OMG and RTN4. As to expression, detected in brain (at protein level). Detected in retina ganglion cell layer and inner nuclear layer.

The protein resides in the cell membrane. The protein localises to the membrane raft. Its subcellular location is the perikaryon. It is found in the cell projection. Its function is as follows. Cell surface receptor that plays a functionally redundant role in postnatal brain development and in regulating axon regeneration in the adult central nervous system. Contributes to normal axon migration across the brain midline and normal formation of the corpus callosum. Protects motoneurons against apoptosis; protection against apoptosis is probably mediated by MAG. Plays a role in inhibiting neurite outgrowth and axon regeneration via its binding to neuronal chondroitin sulfate proteoglycans. Binds heparin. Like other family members, plays a role in restricting the number dendritic spines and the number of synapses that are formed during brain development. Signaling mediates activation of Rho and downstream reorganization of the actin cytoskeleton. The chain is Reticulon-4 receptor-like 1 from Mus musculus (Mouse).